Here is a 216-residue protein sequence, read N- to C-terminus: SPbeta prophage-derived uncharacterized protein YomX (216 aa).

This is SPbeta prophage-derived uncharacterized protein YomX (yomX) from Bacillus subtilis (strain 168).